Here is a 261-residue protein sequence, read N- to C-terminus: uncharacterized protein (261 aa).

It belongs to the PaiB family.

This is an uncharacterized protein from Aspergillus fumigatus (strain ATCC MYA-4609 / CBS 101355 / FGSC A1100 / Af293) (Neosartorya fumigata).